The sequence spans 163 residues: Allophycocyanin alpha-B chain (163 aa).

The residue at position 71 (Asn-71) is an N4-methylasparagine. Cys-81 contacts (2R,3E)-phycocyanobilin.

This sequence belongs to the phycobiliprotein family. As to quaternary structure, heterodimer of an alpha and a beta chain. Post-translationally, contains one covalently linked bilin chromophore.

The protein localises to the cellular thylakoid membrane. Its function is as follows. Light-harvesting photosynthetic bile pigment-protein from the phycobiliprotein complex. Allophycocyanin has a maximum absorption at approximately 650 nanometers. This is Allophycocyanin alpha-B chain from Synechococcus sp. (strain ATCC 27144 / PCC 6301 / SAUG 1402/1) (Anacystis nidulans).